The sequence spans 57 residues: Benzylsuccinate synthase gamma subunit (57 aa).

In terms of assembly, heterohexamer composed of 2 alpha subunits, 2 beta subunits and 2 gamma subunits.

It carries out the reaction toluene + fumarate = 2-benzylsuccinate. It participates in xenobiotic degradation; toluene degradation. Its activity is regulated as follows. Activated by the benzylsuccinate synthase activating enzyme BssD. Rapidly inactivated by oxygen. In terms of biological role, catalyzes the addition of fumarate to the methyl group of toluene, leading to the formation of benzylsuccinate. The sequence is that of Benzylsuccinate synthase gamma subunit (bssC) from Thauera aromatica.